The primary structure comprises 402 residues: LIM/homeobox protein Lhx5 (402 aa).

LIM zinc-binding domains are found at residues valine 3–glycine 61 and threonine 62–leucine 125. The segment covering serine 124–serine 135 has biased composition (low complexity). Disordered stretches follow at residues serine 124–threonine 186 and histidine 298–tryptophan 402. Residues aspartate 151–alanine 167 show a composition bias toward basic and acidic residues. The segment at residues arginine 180–lysine 239 is a DNA-binding region (homeobox). Composition is skewed to low complexity over residues proline 300 to serine 311 and proline 322 to alanine 336.

In terms of tissue distribution, expressed in fetal brain and in various regions of the adult central nervous system including the spinal cord, the thalamus, and the cerebellum.

Its subcellular location is the nucleus. Plays an essential role in the regulation of neuronal differentiation and migration during development of the central nervous system. This chain is LIM/homeobox protein Lhx5 (LHX5), found in Homo sapiens (Human).